Consider the following 652-residue polypeptide: Engulfment and cell motility protein 3 (652 aa).

An ELMO domain is found at 307 to 479 (EQREQLQALR…VVREQLARTL (173 aa)).

In terms of assembly, probably interacts directly with the SH3-domain of DOCK1 via its SH3-binding site. Part of a complex with DOCK1 and RAC1. Interacts with ADGRB3.

The protein resides in the cytoplasm. Its function is as follows. Involved in cytoskeletal rearrangements required for phagocytosis of apoptotic cells and cell motility. Acts in association with DOCK1 and CRK. Was initially proposed to be required in complex with DOCK1 to activate Rac Rho small GTPases. May enhance the guanine nucleotide exchange factor (GEF) activity of DOCK1. The chain is Engulfment and cell motility protein 3 (ELMO3) from Bos taurus (Bovine).